A 366-amino-acid polypeptide reads, in one-letter code: Ribosomal RNA large subunit methyltransferase M (366 aa).

Residues Ser-188, 221–224 (CPGG), Asp-240, Asp-260, and Asp-277 contribute to the S-adenosyl-L-methionine site. Lys-306 serves as the catalytic Proton acceptor.

It belongs to the class I-like SAM-binding methyltransferase superfamily. RNA methyltransferase RlmE family. RlmM subfamily. Monomer.

Its subcellular location is the cytoplasm. It catalyses the reaction cytidine(2498) in 23S rRNA + S-adenosyl-L-methionine = 2'-O-methylcytidine(2498) in 23S rRNA + S-adenosyl-L-homocysteine + H(+). Its function is as follows. Catalyzes the 2'-O-methylation at nucleotide C2498 in 23S rRNA. The chain is Ribosomal RNA large subunit methyltransferase M from Salmonella arizonae (strain ATCC BAA-731 / CDC346-86 / RSK2980).